The primary structure comprises 106 residues: Nucleoid-associated protein RPA0616 (106 aa).

It belongs to the YbaB/EbfC family. Homodimer.

The protein resides in the cytoplasm. Its subcellular location is the nucleoid. Functionally, binds to DNA and alters its conformation. May be involved in regulation of gene expression, nucleoid organization and DNA protection. This is Nucleoid-associated protein RPA0616 from Rhodopseudomonas palustris (strain ATCC BAA-98 / CGA009).